Consider the following 626-residue polypeptide: Ankyrin repeat domain-containing protein 55 (626 aa).

ANK repeat units follow at residues 25 to 54 (VDLA…SILE), 59 to 88 (EGCT…NINT), 92 to 124 (YGRT…IPDK), 125 to 156 (NGRL…EINH), 160 to 189 (EGMT…DPTL), 193 to 222 (DFKT…GPSI), 229 to 259 (SGKT…NLQA), 263 to 292 (DDRT…DSNL), and 296 to 325 (NEST…AEPA). Residues 354–372 (KEEQKAHQKDQSRARPKEE) are compositionally biased toward basic and acidic residues. Disordered regions lie at residues 354–377 (KEEQ…TSEV), 455–491 (HAGL…SLEN), and 522–626 (QPGH…HDEN). At Ser-474 the chain carries Phosphoserine. Over residues 604–614 (QRGHDPPRAEE) the composition is skewed to basic and acidic residues. The segment covering 616-626 (GGSSSPTHDEN) has biased composition (polar residues).

The polypeptide is Ankyrin repeat domain-containing protein 55 (Ankrd55) (Mus musculus (Mouse)).